A 167-amino-acid polypeptide reads, in one-letter code: MAPITLSTVDDDLKEVIQHLFEIQSAVHGYLGPETQTELVRKIKNLTLALSTLSTHTKPQPPSQDEEQKEKQDDTPEGSANDPLLRDIQLPPEIIDYVDAARNPDIYTREFVELVQRGNQDLKGKKEAFASFRDVLAREMRSAMPECRGEVERVLAATGGARVDTEQ.

Residues 53–88 are disordered; it reads LSTHTKPQPPSQDEEQKEKQDDTPEGSANDPLLRDI.

It belongs to the Mediator complex subunit 10 family. Component of the Mediator complex.

The protein resides in the nucleus. In terms of biological role, component of the Mediator complex, a coactivator involved in the regulated transcription of nearly all RNA polymerase II-dependent genes. Mediator functions as a bridge to convey information from gene-specific regulatory proteins to the basal RNA polymerase II transcription machinery. Mediator is recruited to promoters by direct interactions with regulatory proteins and serves as a scaffold for the assembly of a functional preinitiation complex with RNA polymerase II and the general transcription factors. The protein is Mediator of RNA polymerase II transcription subunit 10 (nut2) of Neosartorya fischeri (strain ATCC 1020 / DSM 3700 / CBS 544.65 / FGSC A1164 / JCM 1740 / NRRL 181 / WB 181) (Aspergillus fischerianus).